Reading from the N-terminus, the 366-residue chain is Aminomethyltransferase (366 aa).

This sequence belongs to the GcvT family. As to quaternary structure, the glycine cleavage system is composed of four proteins: P, T, L and H.

It carries out the reaction N(6)-[(R)-S(8)-aminomethyldihydrolipoyl]-L-lysyl-[protein] + (6S)-5,6,7,8-tetrahydrofolate = N(6)-[(R)-dihydrolipoyl]-L-lysyl-[protein] + (6R)-5,10-methylene-5,6,7,8-tetrahydrofolate + NH4(+). Functionally, the glycine cleavage system catalyzes the degradation of glycine. This Bacillus velezensis (strain DSM 23117 / BGSC 10A6 / LMG 26770 / FZB42) (Bacillus amyloliquefaciens subsp. plantarum) protein is Aminomethyltransferase.